The following is a 262-amino-acid chain: tRNA pseudouridine synthase A (262 aa).

The Nucleophile role is filled by Asp51. Tyr109 contributes to the substrate binding site.

It belongs to the tRNA pseudouridine synthase TruA family. Homodimer.

The catalysed reaction is uridine(38/39/40) in tRNA = pseudouridine(38/39/40) in tRNA. Formation of pseudouridine at positions 38, 39 and 40 in the anticodon stem and loop of transfer RNAs. The protein is tRNA pseudouridine synthase A of Actinobacillus pleuropneumoniae serotype 7 (strain AP76).